We begin with the raw amino-acid sequence, 221 residues long: UPF0319 protein CGSHiEE_03630 (221 aa).

A signal peptide spans 1–21; it reads MKLRAVVLGLATLCTSTATFA.

This sequence belongs to the UPF0319 family.

The protein is UPF0319 protein CGSHiEE_03630 of Haemophilus influenzae (strain PittEE).